The chain runs to 75 residues: Small ribosomal subunit protein bS18c (75 aa).

It belongs to the bacterial ribosomal protein bS18 family. In terms of assembly, part of the 30S ribosomal subunit.

Its subcellular location is the plastid. The protein localises to the chloroplast. The chain is Small ribosomal subunit protein bS18c from Adiantum capillus-veneris (Maidenhair fern).